The following is a 104-amino-acid chain: MAAKIRKGDKVIVLTGRDKGRTGEVFEVRPADNKALVRGINIVKRHQKQTQAQEGGIISKEAPINLSNIAIVGKDGKPTRVGFKIQADGKKVRVAKRSGAEIDV.

The protein belongs to the universal ribosomal protein uL24 family. As to quaternary structure, part of the 50S ribosomal subunit.

Its function is as follows. One of two assembly initiator proteins, it binds directly to the 5'-end of the 23S rRNA, where it nucleates assembly of the 50S subunit. One of the proteins that surrounds the polypeptide exit tunnel on the outside of the subunit. In Rhodopseudomonas palustris (strain BisA53), this protein is Large ribosomal subunit protein uL24.